Here is a 355-residue protein sequence, read N- to C-terminus: MQLSSTQPSSKTQEPSTAQDVITMQHILEKLYGANSISRQESQALFGAIIRGELEASQLAAALISMKVRGEHPDEIAGAATALLADAQPFPRPDYLFADIVGTGGDGTNSINISTASAFVAASCGLKIAKHGNRSVSSRSGSSDLLSAFGIKLDMSAQDSRQALDDLGVCFLFAPQYHLGFRHAMPVRQQLKTRTVFNVLGPLVNPARPPLALIGVYSPELVRPIAETLKVLGYQRAAVVHGGGMDEVAIHAPTQVAELNHGEIETYELTHRDFGLDTHPLSALQGGTPEENRDILASLLQGKGERAHAAAVAANVALLLRLFGQEDLRQNAQQALEVIHSGQAYQRVIALSARG.

5-phospho-alpha-D-ribose 1-diphosphate-binding positions include glycine 102, 105–106 (GD), serine 110, 112–115 (NIST), 130–138 (KHGNRSVSS), and serine 142. Glycine 102 lines the anthranilate pocket. Serine 114 lines the Mg(2+) pocket. Asparagine 133 is an anthranilate binding site. An anthranilate-binding site is contributed by arginine 188. Positions 246 and 247 each coordinate Mg(2+).

This sequence belongs to the anthranilate phosphoribosyltransferase family. Homodimer. Requires Mg(2+) as cofactor.

It catalyses the reaction N-(5-phospho-beta-D-ribosyl)anthranilate + diphosphate = 5-phospho-alpha-D-ribose 1-diphosphate + anthranilate. Its pathway is amino-acid biosynthesis; L-tryptophan biosynthesis; L-tryptophan from chorismate: step 2/5. In terms of biological role, catalyzes the transfer of the phosphoribosyl group of 5-phosphorylribose-1-pyrophosphate (PRPP) to anthranilate to yield N-(5'-phosphoribosyl)-anthranilate (PRA). This Pectobacterium atrosepticum (strain SCRI 1043 / ATCC BAA-672) (Erwinia carotovora subsp. atroseptica) protein is Anthranilate phosphoribosyltransferase.